The following is a 416-amino-acid chain: MDLITLGKAAKDAAFQLATASTAQKNKALAIIADELEANAADILAANSKDIELGRQAGLSEAMLDRLLLNESRLNGIANDVRNVISLTDPVGSEIDSKVLENGMQLSRRRVPLGVVGVIYEARPNVTIDIAALCLKTGNASILRGGKETFFSNMELVKVIQSALAKAGLPAASVQYIEKPDRELVTQLLKLDDYVDMIIPRGGAGLHKMCKENSTIPVIIGGFGISHIFVDETADLAKSVDVVENAKAQRPSACNALDTLLVHERIAEQFLPMLVAKLNGKVTFVVEPKAKAYMTKAEQVRDASEGDFDTEWLSYTLGVKVVADVQEAIDHMREHNASHSDAIMTNHLQNAELFINSAGSAAVYVNASTRFTDGAQFGLGAEVAVSTQKLHARGPMGLEELTSYKWVGKANYLSRA.

The protein belongs to the gamma-glutamyl phosphate reductase family.

It localises to the cytoplasm. It carries out the reaction L-glutamate 5-semialdehyde + phosphate + NADP(+) = L-glutamyl 5-phosphate + NADPH + H(+). Its pathway is amino-acid biosynthesis; L-proline biosynthesis; L-glutamate 5-semialdehyde from L-glutamate: step 2/2. Catalyzes the NADPH-dependent reduction of L-glutamate 5-phosphate into L-glutamate 5-semialdehyde and phosphate. The product spontaneously undergoes cyclization to form 1-pyrroline-5-carboxylate. The polypeptide is Gamma-glutamyl phosphate reductase (Vibrio vulnificus (strain YJ016)).